A 1148-amino-acid chain; its full sequence is Protocadherin-19 (1148 aa).

The signal sequence occupies residues 1 to 21; that stretch reads MESLLLPVLLLLAILWTQAAA. 6 Cadherin domains span residues 22–129, 130–238, 239–346, 350–453, 454–563, and 569–672; these read LINL…APSF, PAAQ…NPVF, SEST…PPVI, SVNS…HPHF, SKPY…TPVI, and INGT…QESM. Over 22–678 the chain is Extracellular; it reads LINLKYSVEE…QESMGSVNLS (657 aa). E31, E32, D88, and D90 together coordinate Ca(2+). C93 and C99 are disulfide-bonded. The Ca(2+) site is built by D121, N123, D124, N125, E140, D155, D157, E199, D212, D230, S231, N232, D233, N234, and E249. A glycan (N-linked (GlcNAc...) asparagine) is linked at N261. 15 residues coordinate Ca(2+): D264, D266, N270, D305, E307, D338, N340, D341, N342, E360, D375, D377, N381, D412, and E414. N-linked (GlcNAc...) asparagine glycosylation is present at N420. Residues D427, D445, E446, N447, D448, N449, E464, D479, D481, N485, N522, E524, and D537 each contribute to the Ca(2+) site. N485 carries N-linked (GlcNAc...) asparagine glycosylation. An N-linked (GlcNAc...) asparagine glycan is attached at N546. The Ca(2+) site is built by D555, V556, N557, D558, and N559. N570 carries N-linked (GlcNAc...) asparagine glycosylation. Residues D594, D596, N600, and D646 each contribute to the Ca(2+) site. N676 carries N-linked (GlcNAc...) asparagine glycosylation. A helical membrane pass occupies residues 679-699; the sequence is LIFIIALGSIAGILFVTMIFV. Over 700–1148 the chain is Cytoplasmic; the sequence is AIKCKRDNKE…GVKRLKDIVL (449 aa). 2 disordered regions span residues 901–921 and 1100–1148; these read GNSL…EHDV and NVNN…DIVL. 3 stretches are compositionally biased toward basic and acidic residues: residues 906-921, 1109-1123, and 1130-1148; these read DSGH…EHDV, SEAE…KVMH, and KEGR…DIVL.

In terms of assembly, homodimer; antiparallel. Moderately expressed in all regions of the brain examined, with lowest levels found in the cerebellum. Moderate expression is also found in ovary, and low expression in all other tissues tested. Also detected in primary skin fibroblast.

Its subcellular location is the cell membrane. In terms of biological role, calcium-dependent cell-adhesion protein. This is Protocadherin-19 (PCDH19) from Homo sapiens (Human).